We begin with the raw amino-acid sequence, 325 residues long: Brorin (325 aa).

Positions 1-27 (MPSSTAMAVGALSSSLLVTCCLMVALC) are cleaved as a signal peptide. A disordered region spans residues 37–121 (AQAPEQPGQE…RPRGDTPQAE (85 aa)). Composition is skewed to basic and acidic residues over residues 44–56 (GQEK…RDGP) and 64–78 (RPAR…DWKS). The short motif at 114 to 116 (RGD) is the Mediates cell adhesion element. VWFC domains follow at residues 153-212 (KGCV…PQCK) and 216-274 (NYCE…PICK).

Peripherally associated with AMPAR complex. AMPAR complex consists of an inner core made of 4 pore-forming GluA/GRIA proteins (GRIA1, GRIA2, GRIA3 and GRIA4) and 4 major auxiliary subunits arranged in a twofold symmetry. One of the two pairs of distinct binding sites is occupied either by CNIH2, CNIH3 or CACNG2, CACNG3. The other harbors CACNG2, CACNG3, CACNG4, CACNG8 or GSG1L. This inner core of AMPAR complex is complemented by outer core constituents binding directly to the GluA/GRIA proteins at sites distinct from the interaction sites of the inner core constituents. Outer core constituents include at least PRRT1, PRRT2, CKAMP44/SHISA9, FRRS1L and NRN1. The proteins of the inner and outer core serve as a platform for other, more peripherally associated AMPAR constituents, including VWC2. Alone or in combination, these auxiliary subunits control the gating and pharmacology of the AMPAR complex and profoundly impact their biogenesis and protein processing.

The protein localises to the secreted. It localises to the extracellular space. It is found in the extracellular matrix. The protein resides in the basement membrane. Its subcellular location is the synapse. Its function is as follows. BMP antagonist which may play a role in neural development. Promotes cell adhesion. In Homo sapiens (Human), this protein is Brorin (VWC2).